The primary structure comprises 388 residues: MAAGADVPCAVLALLVLGSLAAGGDATAGFIKSPLSQRRLTQDSVELHCEAVGSPIPEIQWWFEGNEPNETSAQLWDGAWQDRVQINATYNLHSTSTIYIANLTSDDSGTYECRASNDPDRNHLSKSPKVKWIRSQANVLVIERPVITGQYSSSADKVVLSCNISAPPTLIKGHKWMLGDKVLKTDESDASSYISYTIEGKVEDHSGVYECIYNTNPVAKGNVSIEVEPQVVAYKKSEHGNEGDVGVLTCKSPSYPPVDHWAWYKSGQTVPLESSAGIYNISRTGNKTELRILKLNIEQDMGDYSCNGTNMKGSGSATVNLRVRSRLAALWPFLGIVAEVLVLVTIIFIYEKRRKPDEVLDDDDGGSAPLKSNATNHKDKNVRQRNAN.

Positions 1 to 21 are cleaved as a signal peptide; sequence MAAGADVPCAVLALLVLGSLA. Topologically, residues 27-323 are extracellular; it reads TAGFIKSPLS…SGSATVNLRV (297 aa). The Ig-like domain maps to 43–131; that stretch reads DSVELHCEAV…NHLSKSPKVK (89 aa). Intrachain disulfides connect C49/C113 and C162/C211. Residues 143–218 enclose the Ig-like C2-type domain; sequence ERPVITGQYS…YECIYNTNPV (76 aa). N-linked (GlcNAc...) asparagine glycans are attached at residues N163, N222, N280, N286, and N307. One can recognise an Ig-like V-type domain in the interval 229-323; it reads PQVVAYKKSE…SGSATVNLRV (95 aa). An intrachain disulfide couples C250 to C306. Residues 324 to 344 traverse the membrane as a helical segment; the sequence is RSRLAALWPFLGIVAEVLVLV. The Cytoplasmic portion of the chain corresponds to 345-388; the sequence is TIIFIYEKRRKPDEVLDDDDGGSAPLKSNATNHKDKNVRQRNAN. The tract at residues 358–388 is disordered; sequence EVLDDDDGGSAPLKSNATNHKDKNVRQRNAN.

In terms of assembly, interacts with NXNL1, SLC2A1 and SLC16A1. N-glycosylated. Retinal cone photoreceptors (at protein level). As to expression, brain endothelial cells, kidney epithelial cells and erythroblasts (at protein level).

It localises to the cell membrane. The protein resides in the photoreceptor inner segment. The protein localises to the cell projection. It is found in the cilium. Its subcellular location is the photoreceptor outer segment. It localises to the endoplasmic reticulum membrane. The protein resides in the basolateral cell membrane. Functionally, essential for normal retinal maturation and development. Acts as a retinal cell surface receptor for NXNL1 and plays an important role in NXNL1-mediated survival of retinal cone photoreceptors. In association with glucose transporter SLC16A1/GLUT1 and NXNL1, promotes retinal cone survival by enhancing aerobic glycolysis and accelerating the entry of glucose into photoreceptors. Signaling receptor for cyclophilins, essential for PPIA/CYPA and PPIB/CYPB-dependent signaling related to chemotaxis and adhesion of immune cells. Plays an important role in targeting the monocarboxylate transporters SLC16A1/GLUT1, SLC16A3, SLC16A8, SLC16A11 and SLC16A12 to the plasma membrane. Acts as a coreceptor for vascular endothelial growth factor receptor 2 (KDR/VEGFR2) in endothelial cells enhancing its VEGFA-mediated activation and downstream signaling. Promotes angiogenesis through EPAS1/HIF2A-mediated up-regulation of VEGFA and KDR/VEGFR2 in endothelial cells. The sequence is that of Basigin (BSG) from Gallus gallus (Chicken).